The chain runs to 430 residues: Tyrosine--tRNA ligase (430 aa).

Tyr-36 is an L-tyrosine binding site. Residues 41–50 carry the 'HIGH' region motif; it reads PTASSLHVGS. L-tyrosine is bound by residues Tyr-170 and Gln-174. Positions 230–234 match the 'KMSKS' region motif; the sequence is KMGKT. Lys-233 contacts ATP. One can recognise an S4 RNA-binding domain in the interval 362-427; sequence VPAFELFDEI…GKKNYHRLVL (66 aa).

This sequence belongs to the class-I aminoacyl-tRNA synthetase family. TyrS type 1 subfamily. Homodimer.

It is found in the cytoplasm. It carries out the reaction tRNA(Tyr) + L-tyrosine + ATP = L-tyrosyl-tRNA(Tyr) + AMP + diphosphate + H(+). Catalyzes the attachment of tyrosine to tRNA(Tyr) in a two-step reaction: tyrosine is first activated by ATP to form Tyr-AMP and then transferred to the acceptor end of tRNA(Tyr). The sequence is that of Tyrosine--tRNA ligase from Desulfatibacillum aliphaticivorans.